The following is a 189-amino-acid chain: Elongation factor P (189 aa).

Lys34 carries the N6-(3,6-diaminohexanoyl)-5-hydroxylysine modification.

Belongs to the elongation factor P family. Post-translationally, may be beta-lysylated on the epsilon-amino group of Lys-34 by the combined action of EpmA and EpmB, and then hydroxylated on the C5 position of the same residue by EpmC (if this protein is present). Lysylation is critical for the stimulatory effect of EF-P on peptide-bond formation. The lysylation moiety may extend toward the peptidyltransferase center and stabilize the terminal 3-CCA end of the tRNA. Hydroxylation of the C5 position on Lys-34 may allow additional potential stabilizing hydrogen-bond interactions with the P-tRNA.

It is found in the cytoplasm. The protein operates within protein biosynthesis; polypeptide chain elongation. Its function is as follows. Involved in peptide bond synthesis. Alleviates ribosome stalling that occurs when 3 or more consecutive Pro residues or the sequence PPG is present in a protein, possibly by augmenting the peptidyl transferase activity of the ribosome. Modification of Lys-34 is required for alleviation. This is Elongation factor P from Francisella philomiragia subsp. philomiragia (strain ATCC 25017 / CCUG 19701 / FSC 153 / O#319-036).